The sequence spans 342 residues: Autoinducer 2 import system permease protein LsrC (342 aa).

Topologically, residues 1–13 (MLKFIQNNREITA) are periplasmic. The chain crosses the membrane as a helical span at residues 14–34 (LLAVLLLFVLPGFLDRQYLSV). Residues 35-38 (QTLT) lie on the Cytoplasmic side of the membrane. Residues 39–59 (MVYSSAQILILLAMGATLVML) traverse the membrane as a helical segment. At 60 to 69 (TRNIDVSVGS) the chain is on the periplasmic side. A helical membrane pass occupies residues 70 to 90 (ITGMCAVLLGMLLNAGYSLPV). Over 91–92 (AC) the chain is Cytoplasmic. The chain crosses the membrane as a helical span at residues 93 to 113 (VATLLLGLLAGFFNGVLVAWL). Residue lysine 114 is a topological domain, periplasmic. Residues 115 to 135 (IPAIVATLGTLGLYRGIMLLW) form a helical membrane-spanning segment. Residues 136-154 (TGGKWIEGLPAELKQLSAP) are Cytoplasmic-facing. The helical transmembrane segment at 155-175 (LLLGVSAIGWLTIILVAFMAW) threads the bilayer. Over 176 to 212 (LLAKTAFGRSFYATGDNLQGARQLGVRTEAIRIVAFS) the chain is Periplasmic. The chain crosses the membrane as a helical span at residues 213 to 233 (LNGCMAALAGIVFASQIGFIP). Residues 234–251 (NQTGTGLEMKAIAACVLG) lie on the Cytoplasmic side of the membrane. A helical membrane pass occupies residues 252 to 272 (GISLLGGSGAIIGAVLGAWFL). The Periplasmic segment spans residues 273 to 283 (TQIDSVLVLLR). Residues 284-304 (IPAWWNDFIAGLVLLAVLVFD) form a helical membrane-spanning segment. At 305-342 (GRLRCALELNLRRQKYARFMTPPPSVKPASSGKKREAA) the chain is on the cytoplasmic side.

The protein belongs to the binding-protein-dependent transport system permease family. AraH/RbsC subfamily. The complex is composed of two ATP-binding proteins (LsrA), two transmembrane proteins (LsrC and LsrD) and a solute-binding protein (LsrB).

Its subcellular location is the cell inner membrane. Part of the ABC transporter complex LsrABCD involved in autoinducer 2 (AI-2) import. Probably responsible for the translocation of the substrate across the membrane. This Escherichia coli O157:H7 protein is Autoinducer 2 import system permease protein LsrC (lsrC).